A 380-amino-acid chain; its full sequence is Carbonic anhydrase 2 (380 aa).

Residues 1 to 20 (MARTGALLLAALALAGCAQA) form the signal peptide. In terms of domain architecture, Alpha-carbonic anhydrase spans 38–322 (DHWDHSLNGE…HHHRRLLHNH (285 aa)). Disulfide bonds link cysteine 61–cysteine 264, cysteine 194–cysteine 198, and cysteine 296–cysteine 354. An N-linked (GlcNAc...) asparagine glycan is attached at asparagine 101. Histidine 112 (proton acceptor) is an active-site residue. Asparagine 135 is a glycosylation site (N-linked (GlcNAc...) asparagine). Positions 163, 165, and 182 each coordinate Zn(2+). Substrate is bound at residue 260 to 261 (TT). Asparagine 297 carries N-linked (GlcNAc...) asparagine glycosylation.

Belongs to the alpha-carbonic anhydrase family. As to quaternary structure, tetramer of two large and two small subunits linked by two disulfide bonds. Zn(2+) is required as a cofactor.

It is found in the periplasm. The enzyme catalyses hydrogencarbonate + H(+) = CO2 + H2O. In terms of biological role, reversible hydration of carbon dioxide. This Chlamydomonas reinhardtii (Chlamydomonas smithii) protein is Carbonic anhydrase 2 (CAH2).